Here is a 579-residue protein sequence, read N- to C-terminus: ATP-dependent lipid A-core flippase (579 aa).

Transmembrane regions (helical) follow at residues 24–44, 61–81, 147–167, and 253–273; these read FLAAVVGYAIYAASSTALAEM, LMLPLFVIGMFAARGVGTFLG, LFVIGLVSYLLWTNWMLTLIF, and LLVALSLAGLVWLAMSPALMA. One can recognise an ABC transmembrane type-1 domain in the interval 25-306; sequence LAAVVGYAIY…LTEVNSTIQK (282 aa). Positions 338–573 constitute an ABC transporter domain; that stretch reads VRFEGVRFRY…DGAYAALHQL (236 aa). An ATP-binding site is contributed by 372-379; the sequence is GRSGSGKS.

This sequence belongs to the ABC transporter superfamily. Lipid exporter (TC 3.A.1.106) family. Homodimer.

It is found in the cell inner membrane. The enzyme catalyses ATP + H2O + lipid A-core oligosaccharideSide 1 = ADP + phosphate + lipid A-core oligosaccharideSide 2.. Functionally, involved in lipopolysaccharide (LPS) biosynthesis. Translocates lipid A-core from the inner to the outer leaflet of the inner membrane. Transmembrane domains (TMD) form a pore in the inner membrane and the ATP-binding domain (NBD) is responsible for energy generation. This Chromohalobacter salexigens (strain ATCC BAA-138 / DSM 3043 / CIP 106854 / NCIMB 13768 / 1H11) protein is ATP-dependent lipid A-core flippase.